The following is a 301-amino-acid chain: N-acetylmuramic acid 6-phosphate etherase (301 aa).

The 164-residue stretch at 57–220 (VVERLRAGGR…STISMVRLGK (164 aa)) folds into the SIS domain. E85 acts as the Proton donor in catalysis. Residue E116 is part of the active site.

The protein belongs to the GCKR-like family. MurNAc-6-P etherase subfamily. In terms of assembly, homodimer.

It carries out the reaction N-acetyl-D-muramate 6-phosphate + H2O = N-acetyl-D-glucosamine 6-phosphate + (R)-lactate. The protein operates within amino-sugar metabolism; N-acetylmuramate degradation. Functionally, specifically catalyzes the cleavage of the D-lactyl ether substituent of MurNAc 6-phosphate, producing GlcNAc 6-phosphate and D-lactate. The sequence is that of N-acetylmuramic acid 6-phosphate etherase from Rubrobacter xylanophilus (strain DSM 9941 / JCM 11954 / NBRC 16129 / PRD-1).